The primary structure comprises 251 residues: Probable transcriptional regulatory protein RSal33209_2002 (251 aa).

It belongs to the TACO1 family.

It is found in the cytoplasm. This Renibacterium salmoninarum (strain ATCC 33209 / DSM 20767 / JCM 11484 / NBRC 15589 / NCIMB 2235) protein is Probable transcriptional regulatory protein RSal33209_2002.